The following is a 463-amino-acid chain: Retinoic acid receptor RXR-gamma (463 aa).

Residues 1–138 form a modulating region; sequence MYGNYSHFMK…TSPGSLVKHI (138 aa). Residues 16–53 form a disordered region; the sequence is GGSPGHTGSTSMSPSVALPTGKPMDSHPSYTDTPVSAP. 2 consecutive NR C4-type zinc fingers follow at residues 139–159 and 175–199; these read CAICGDRSSGKHYGVYSCEGC and CRDNKDCLIDKRQRNRCQYCRYQKC. Residues 139-204 constitute a DNA-binding region (nuclear receptor); the sequence is CAICGDRSSG…RYQKCLVMGM (66 aa). Residues 205-230 form a hinge region; the sequence is KREAVQEERQRSRERAESEAECASSS. The span at 211-222 shows a compositional bias: basic and acidic residues; it reads EERQRSRERAES. Residues 211 to 232 form a disordered region; sequence EERQRSRERAESEAECASSSHE. The NR LBD domain occupies 231-459; sequence HEDMPVERIL…SFLMEMLETP (229 aa).

Belongs to the nuclear hormone receptor family. NR2 subfamily. Homodimer. Heterodimer with a RAR molecule. Binds DNA preferentially as a RAR/RXR heterodimer. Interacts with RARA. Acetylated by EP300.

The protein localises to the nucleus. Its subcellular location is the cytoplasm. Its function is as follows. Receptor for retinoic acid. Retinoic acid receptors bind as heterodimers to their target response elements in response to their ligands, all-trans or 9-cis retinoic acid, and regulate gene expression in various biological processes. The RAR/RXR heterodimers bind to the retinoic acid response elements (RARE) composed of tandem 5'-AGGTCA-3' sites known as DR1-DR5. The high affinity ligand for RXRs is 9-cis retinoic acid. The sequence is that of Retinoic acid receptor RXR-gamma (Rxrg) from Mus musculus (Mouse).